Consider the following 434-residue polypeptide: Histidinol dehydrogenase (434 aa).

3 residues coordinate NAD(+): Tyr-130, Gln-188, and Asn-211. Ser-237, Gln-259, and His-262 together coordinate substrate. 2 residues coordinate Zn(2+): Gln-259 and His-262. Catalysis depends on proton acceptor residues Glu-326 and His-327. Positions 327, 360, 414, and 419 each coordinate substrate. Asp-360 lines the Zn(2+) pocket. His-419 serves as a coordination point for Zn(2+).

The protein belongs to the histidinol dehydrogenase family. Homodimer. The cofactor is Zn(2+).

The enzyme catalyses L-histidinol + 2 NAD(+) + H2O = L-histidine + 2 NADH + 3 H(+). It functions in the pathway amino-acid biosynthesis; L-histidine biosynthesis; L-histidine from 5-phospho-alpha-D-ribose 1-diphosphate: step 9/9. Its function is as follows. Catalyzes the sequential NAD-dependent oxidations of L-histidinol to L-histidinaldehyde and then to L-histidine. The sequence is that of Histidinol dehydrogenase from Escherichia coli O6:H1 (strain CFT073 / ATCC 700928 / UPEC).